The sequence spans 61 residues: Large ribosomal subunit protein uL30 (61 aa).

Belongs to the universal ribosomal protein uL30 family. As to quaternary structure, part of the 50S ribosomal subunit.

This chain is Large ribosomal subunit protein uL30, found in Petrotoga mobilis (strain DSM 10674 / SJ95).